The chain runs to 153 residues: Mitochondrial fission 1 protein (153 aa).

The Cytoplasmic portion of the chain corresponds to 1-127; it reads MFGKSTYPAL…SIHEKVTQEG (127 aa). A TPR repeat occupies 76 to 109; that stretch reads RECLYYLALGSYKIGDYSNATRYADTLLKNEPEN. A helical transmembrane segment spans residues 128 to 148; it reads LIGIGIAGGALAVGVGILGAL. Residues 149 to 153 lie on the Mitochondrial intermembrane side of the membrane; the sequence is LRKKR.

It belongs to the FIS1 family.

It localises to the mitochondrion outer membrane. Has a role in mitochondrial fission. Has a role in outer membrane fission but not matrix separation. The protein is Mitochondrial fission 1 protein (FIS1) of Debaryomyces hansenii (strain ATCC 36239 / CBS 767 / BCRC 21394 / JCM 1990 / NBRC 0083 / IGC 2968) (Yeast).